The chain runs to 326 residues: Pyruvate dehydrogenase E1 component subunit alpha (326 aa).

As to quaternary structure, heterodimer of an alpha and a beta chain. The cofactor is thiamine diphosphate.

It carries out the reaction N(6)-[(R)-lipoyl]-L-lysyl-[protein] + pyruvate + H(+) = N(6)-[(R)-S(8)-acetyldihydrolipoyl]-L-lysyl-[protein] + CO2. Functionally, the pyruvate dehydrogenase complex catalyzes the overall conversion of pyruvate to acetyl-CoA and CO(2). It contains multiple copies of three enzymatic components: pyruvate dehydrogenase (E1), dihydrolipoamide acetyltransferase (E2) and lipoamide dehydrogenase (E3). In Rickettsia typhi (strain ATCC VR-144 / Wilmington), this protein is Pyruvate dehydrogenase E1 component subunit alpha (pdhA).